The primary structure comprises 438 residues: Probable inactive protein kinase 38 (438 aa).

A Protein kinase domain is found at P77–L340.

The protein belongs to the protein kinase superfamily. Tyr protein kinase family.

This is Probable inactive protein kinase 38 (36) from Equus caballus (Horse).